Reading from the N-terminus, the 568-residue chain is 4-hydroxy-7-methoxy-3-oxo-3,4-dihydro-2H-1,4-benzoxazin-2-yl glucoside beta-D-glucosidase, chloroplastic (568 aa).

Residues Met1–Ala50 constitute a chloroplast transit peptide. Residues Gln92, His194, and Asn239–Glu240 each bind a beta-D-glucoside. The Proton donor role is filled by Glu240. A disulfide bond links Cys259 and Cys265. A beta-D-glucoside-binding positions include Tyr383, Glu456, Trp504, Glu511–Trp512, and Phe520. Glu456 (nucleophile) is an active-site residue.

This sequence belongs to the glycosyl hydrolase 1 family. Homohexamer. As to expression, expressed in seedlings, mesocotyl, coleoptile, leaf sheath, and roots.

The protein localises to the plastid. Its subcellular location is the chloroplast. It catalyses the reaction DIMBOA beta-D-glucoside + H2O = DIMBOA + D-glucose. The enzyme catalyses DIBOA beta-D-glucoside + H2O = DIBOA + D-glucose. It carries out the reaction Hydrolysis of terminal, non-reducing beta-D-glucosyl residues with release of beta-D-glucose.. Its activity is regulated as follows. Inhibited by castanospermine, Ag(+) and Cu(2+). 34% inhibition by Zn(2+) and not affected by EDTA. Its function is as follows. Involved in defense of young plant parts against pests via the production of benzoxazolinones (hydroxamic acids) from hydroxamic acid glucosides. The preferred substrate is DIBOA-beta-D-glucoside. Can also use esculin and genistein glucoside as substrates, but no activity with salicin, p-nitrophenyl-alpha-glucoside or substrates related to cell wall components. In Secale cereale (Rye), this protein is 4-hydroxy-7-methoxy-3-oxo-3,4-dihydro-2H-1,4-benzoxazin-2-yl glucoside beta-D-glucosidase, chloroplastic.